A 354-amino-acid polypeptide reads, in one-letter code: Long form salivary protein D7L3 (354 aa).

Residues 1-26 (MQLTPRSVHLVHLLLAATTLISPSWS) form the signal peptide.

It belongs to the PBP/GOBP family.

The protein localises to the secreted. In terms of biological role, modulates blood feeding of female mosquitoes on vertebrate species by binding and sequestering different mediators involved in the host response. Binds serotonin with high affinity. Binds weakly noradrenaline and histamine. Does not bind tryptamine, octopamine, dopamine, adrenaline, leukotriene C4, leukotriene D4, leukotriene B4, ADP and U-46619, a stable analog of thromboxane A2. Inhibits agonist-induced platelet aggregation. Exhibits vasodilating activity. This chain is Long form salivary protein D7L3, found in Anopheles gambiae (African malaria mosquito).